The primary structure comprises 131 residues: Holo-[acyl-carrier-protein] synthase (131 aa).

Positions 8 and 58 each coordinate Mg(2+).

This sequence belongs to the P-Pant transferase superfamily. AcpS family. The cofactor is Mg(2+).

It localises to the cytoplasm. It carries out the reaction apo-[ACP] + CoA = holo-[ACP] + adenosine 3',5'-bisphosphate + H(+). In terms of biological role, transfers the 4'-phosphopantetheine moiety from coenzyme A to a Ser of acyl-carrier-protein. This Oenococcus oeni (strain ATCC BAA-331 / PSU-1) protein is Holo-[acyl-carrier-protein] synthase.